Here is a 193-residue protein sequence, read N- to C-terminus: Chromophore lyase CpcS/CpeS 4 (193 aa).

It belongs to the CpcS/CpeS biliprotein lyase family.

In terms of biological role, covalently attaches a chromophore to Cys residue(s) of phycobiliproteins. This Trichodesmium erythraeum (strain IMS101) protein is Chromophore lyase CpcS/CpeS 4.